A 156-amino-acid polypeptide reads, in one-letter code: Small ribosomal subunit protein uS11 (156 aa).

The segment at 1–27 (MSEKEQKEVEAKESSGKAEERRETREK) is disordered.

The protein belongs to the universal ribosomal protein uS11 family. Part of the 30S ribosomal subunit.

In terms of biological role, located on the platform of the 30S subunit. The protein is Small ribosomal subunit protein uS11 of Thermofilum pendens (strain DSM 2475 / Hrk 5).